The sequence spans 875 residues: Serine/threonine-protein kinase ATG1 (875 aa).

The 297-residue stretch at 22–318 (YSIGPEIGKG…FNEFFNDPLI (297 aa)) folds into the Protein kinase domain. ATP-binding positions include 28 to 36 (IGKGSFATV) and Lys51. The active-site Proton acceptor is the Asp168. A compositionally biased stretch (basic and acidic residues) spans 367–379 (EKSKQDLPAREVS). Disordered stretches follow at residues 367-422 (EKSK…QPHN) and 470-515 (INPR…DRRI). Residues 380–389 (THASESQTKA) are compositionally biased toward polar residues. Positions 390-405 (VDTRPSSRDEEIKEII) are enriched in basic and acidic residues. Composition is skewed to polar residues over residues 406–420 (NKNS…SIQP), 473–490 (RRTS…NNMQ), and 497–508 (LRSNSSGSQRRP).

The protein belongs to the protein kinase superfamily. Ser/Thr protein kinase family. APG1/unc-51/ULK1 subfamily. As to quaternary structure, homodimer. Forms a ternary complex with ATG13 and ATG17.

It is found in the cytoplasm. The protein localises to the preautophagosomal structure membrane. The catalysed reaction is L-seryl-[protein] + ATP = O-phospho-L-seryl-[protein] + ADP + H(+). It carries out the reaction L-threonyl-[protein] + ATP = O-phospho-L-threonyl-[protein] + ADP + H(+). Serine/threonine protein kinase involved in the cytoplasm to vacuole transport (Cvt) and found to be essential in autophagy, where it is required for the formation of autophagosomes. Involved in the clearance of protein aggregates which cannot be efficiently cleared by the proteasome. Required for selective autophagic degradation of the nucleus (nucleophagy) as well as for mitophagy which contributes to regulate mitochondrial quantity and quality by eliminating the mitochondria to a basal level to fulfill cellular energy requirements and preventing excess ROS production. Also involved in endoplasmic reticulum-specific autophagic process, in selective removal of ER-associated degradation (ERAD) substrates. Plays a key role in ATG9 and ATG23 cycling through the pre-autophagosomal structure and is necessary to promote ATG18 binding to ATG9 through phosphorylation of ATG9. Catalyzes phosphorylation of ATG4, decreasing the interaction between ATG4 and ATG8 and impairing deconjugation of PE-conjugated forms of ATG8. The protein is Serine/threonine-protein kinase ATG1 of Debaryomyces hansenii (strain ATCC 36239 / CBS 767 / BCRC 21394 / JCM 1990 / NBRC 0083 / IGC 2968) (Yeast).